A 28-amino-acid polypeptide reads, in one-letter code: Cruzioseptin-4 (28 aa).

The residue at position 25 (Glu25) is a Glutamic acid 1-amide. The propeptide occupies 27–28; the sequence is EH.

In terms of tissue distribution, expressed by the skin glands.

The protein resides in the secreted. In terms of biological role, has antimicrobial activity. This chain is Cruzioseptin-4, found in Cruziohyla calcarifer (Splendid leaf frog).